The chain runs to 555 residues: Pentatricopeptide repeat-containing protein At2g44880 (555 aa).

PPR repeat units follow at residues 41–75, 77–111, 112–142, 143–173, 175–205, 206–240, 241–267, 273–307, 308–342, 343–370, 373–407, and 408–438; these read DSFL…TCFA, DNFT…GFCA, DMYV…MPHR, SEVS…MPHV, DVVI…MTHK, TVIT…NLVS, WNTM…MQAT, DDVT…KLDK, KVKV…QVAS, WNAM…MIEE, DEIT…GLNA, and KIEH…MPFE. The type E motif stretch occupies residues 443–518; sequence ILSSFLSACG…EVGCSLIEIN (76 aa). A type E(+) motif region spans residues 519–549; that stretch reads YIVSEFISGDTTHPHRRSIHLVLGDLLMHMN.

This sequence belongs to the PPR family. PCMP-E subfamily.

This is Pentatricopeptide repeat-containing protein At2g44880 (PCMP-E9) from Arabidopsis thaliana (Mouse-ear cress).